A 262-amino-acid chain; its full sequence is Pyridoxine 5'-phosphate synthase (262 aa).

Asparagine 6 provides a ligand contact to 3-amino-2-oxopropyl phosphate. 8-9 (DH) provides a ligand contact to 1-deoxy-D-xylulose 5-phosphate. A 3-amino-2-oxopropyl phosphate-binding site is contributed by arginine 17. The active-site Proton acceptor is the histidine 43. 1-deoxy-D-xylulose 5-phosphate contacts are provided by arginine 45 and histidine 50. The Proton acceptor role is filled by glutamate 70. Residue threonine 102 participates in 1-deoxy-D-xylulose 5-phosphate binding. Histidine 215 serves as the catalytic Proton donor. Residues glycine 216 and 237–238 (GH) each bind 3-amino-2-oxopropyl phosphate.

This sequence belongs to the PNP synthase family. As to quaternary structure, homooctamer; tetramer of dimers.

Its subcellular location is the cytoplasm. The enzyme catalyses 3-amino-2-oxopropyl phosphate + 1-deoxy-D-xylulose 5-phosphate = pyridoxine 5'-phosphate + phosphate + 2 H2O + H(+). The protein operates within cofactor biosynthesis; pyridoxine 5'-phosphate biosynthesis; pyridoxine 5'-phosphate from D-erythrose 4-phosphate: step 5/5. Its function is as follows. Catalyzes the complicated ring closure reaction between the two acyclic compounds 1-deoxy-D-xylulose-5-phosphate (DXP) and 3-amino-2-oxopropyl phosphate (1-amino-acetone-3-phosphate or AAP) to form pyridoxine 5'-phosphate (PNP) and inorganic phosphate. The polypeptide is Pyridoxine 5'-phosphate synthase (Helicobacter pylori (strain Shi470)).